The sequence spans 65 residues: Large ribosomal subunit protein bL33 (65 aa).

A disordered region spans residues 17-40 (SRSVPSSEKRSAGVSRYTTEKNRR).

Belongs to the bacterial ribosomal protein bL33 family.

The polypeptide is Large ribosomal subunit protein bL33 (Prochlorococcus marinus (strain NATL1A)).